A 273-amino-acid polypeptide reads, in one-letter code: Putative phosphoenolpyruvate synthase regulatory protein (273 aa).

Residue 153 to 160 (AVSRAGKT) participates in ADP binding.

Belongs to the pyruvate, phosphate/water dikinase regulatory protein family. PSRP subfamily.

It carries out the reaction [pyruvate, water dikinase] + ADP = [pyruvate, water dikinase]-phosphate + AMP + H(+). The catalysed reaction is [pyruvate, water dikinase]-phosphate + phosphate + H(+) = [pyruvate, water dikinase] + diphosphate. In terms of biological role, bifunctional serine/threonine kinase and phosphorylase involved in the regulation of the phosphoenolpyruvate synthase (PEPS) by catalyzing its phosphorylation/dephosphorylation. This Xanthomonas oryzae pv. oryzae (strain MAFF 311018) protein is Putative phosphoenolpyruvate synthase regulatory protein.